The chain runs to 127 residues: Prefoldin subunit 6 (127 aa).

Ala-2 carries the post-translational modification N-acetylalanine. At Lys-21 the chain carries N6-acetyllysine. Lys-66 carries the N6-acetyllysine; alternate modification. Lys-66 participates in a covalent cross-link: Glycyl lysine isopeptide (Lys-Gly) (interchain with G-Cter in SUMO1); alternate. Lys-66 is covalently cross-linked (Glycyl lysine isopeptide (Lys-Gly) (interchain with G-Cter in SUMO2); alternate).

Belongs to the prefoldin subunit beta family. As to quaternary structure, heterohexamer of two PFD-alpha type and four PFD-beta type subunits. Component of the PAQosome complex which is responsible for the biogenesis of several protein complexes and which consists of R2TP complex members RUVBL1, RUVBL2, RPAP3 and PIH1D1, URI complex members PFDN2, PFDN6, PDRG1, UXT and URI1 as well as ASDURF, POLR2E and DNAAF10/WDR92.

Its function is as follows. Binds specifically to cytosolic chaperonin (c-CPN) and transfers target proteins to it. Binds to nascent polypeptide chain and promotes folding in an environment in which there are many competing pathways for nonnative proteins. This chain is Prefoldin subunit 6 (Pfdn6), found in Mus musculus (Mouse).